We begin with the raw amino-acid sequence, 568 residues long: Phosphoprotein (568 aa).

The disordered stretch occupies residues 1–23 (MDQDALISKEDSEVEREASGGRE). Positions 7 to 20 (ISKEDSEVEREASG) are enriched in basic and acidic residues. The interval 33–41 (DAVLSSEPT) is N0 binding. Residues 54 to 317 (INTLQRPGST…SPETDATKKG (264 aa)) are disordered. 3 stretches are compositionally biased toward basic and acidic residues: residues 99–110 (AEAHARNVDKQN), 150–168 (GAEDENREMAANPDKRGED), and 175–193 (EEIRRSAPLPDEREGRADN). S249, S257, and S260 each carry phosphoserine; by host. The segment at 344 to 411 (FESSRDASYV…SFRDIYKRFS (68 aa)) is multimerization. The stretch at 364 to 429 (YAEMAFNVCG…LLMSNLSTLH (66 aa)) forms a coiled coil. The interval 412-445 (EYQKEQNSLLMSNLSTLHIITDRGGKTDNPDSPT) is l protein binding. The interval 433–462 (DRGGKTDNPDSPTRSPSVFAKTKENKTKAT) is disordered. A phosphoserine; by host mark is found at S447 and S449. A compositionally biased stretch (basic and acidic residues) spans 453-462 (KTKENKTKAT). Residues 479 to 568 (DLLREDEFRE…VEEDIESLTN (90 aa)) are interaction with the nucleocapsid (N-RNA).

This sequence belongs to the respirovirus P protein family. Homotetramer. Interacts (via multimerization domain) with polymerase L; this interaction forms the polymerase complex. Interacts (via N-terminus) with N0; this interaction allows P to chaperon N0 before encapsidation and form the N-P complex. Interacts (via C-terminus) with N-RNA template; this interaction positions the polymerase on the template. In terms of processing, phosphorylated by PKC/PRKCZ, and other unknown kinases. Phosphorylation is necessary for viral transcription and replication. The N-terminus contains the majority of phosphorylated sites. Ser-249 is the major site of phosphorylation, but is not necessary for most functions.

The protein localises to the host cytoplasm. Essential cofactor of the RNA polymerase L that plays a central role in the transcription and replication by forming the polymerase complex with RNA polymerase L and recruiting L to the genomic N-RNA template for RNA synthesis. Also plays a central role in the encapsidation of nascent RNA chains by forming the encapsidation complex with the nucleocapsid protein N (N-P complex). Acts as a chaperone for newly synthesized free N protein, so-called N0, allowing encapsidation of nascent RNA chains during replication. The nucleoprotein protein N prevents excessive phosphorylation of P, which leads to down-regulation of viral transcription/ replication. Participates, together with N, in the formation of viral factories (viroplasms), which are large inclusions in the host cytoplasm where replication takes place. Recruits host PI4KB and remodel the host endoplasmic reticulum membrane to form viral replication factories. This is Phosphoprotein (P/V/C) from Sendai virus (strain Ohita) (SeV).